Reading from the N-terminus, the 299-residue chain is tRNA dimethylallyltransferase (299 aa).

Residue 13 to 20 (GPTASGKT) participates in ATP binding. A substrate-binding site is contributed by 15–20 (TASGKT). Residues 38–41 (DSRQ) are interaction with substrate tRNA.

Belongs to the IPP transferase family. As to quaternary structure, monomer. It depends on Mg(2+) as a cofactor.

The catalysed reaction is adenosine(37) in tRNA + dimethylallyl diphosphate = N(6)-dimethylallyladenosine(37) in tRNA + diphosphate. In terms of biological role, catalyzes the transfer of a dimethylallyl group onto the adenine at position 37 in tRNAs that read codons beginning with uridine, leading to the formation of N6-(dimethylallyl)adenosine (i(6)A). This Prochlorococcus marinus (strain MIT 9313) protein is tRNA dimethylallyltransferase.